Here is a 199-residue protein sequence, read N- to C-terminus: Large ribosomal subunit protein bL25 (199 aa).

Belongs to the bacterial ribosomal protein bL25 family. CTC subfamily. As to quaternary structure, part of the 50S ribosomal subunit; part of the 5S rRNA/L5/L18/L25 subcomplex. Contacts the 5S rRNA. Binds to the 5S rRNA independently of L5 and L18.

Functionally, this is one of the proteins that binds to the 5S RNA in the ribosome where it forms part of the central protuberance. The sequence is that of Large ribosomal subunit protein bL25 from Nostoc punctiforme (strain ATCC 29133 / PCC 73102).